An 88-amino-acid polypeptide reads, in one-letter code: Co-chaperonin GroES (88 aa).

It belongs to the GroES chaperonin family. Heptamer of 7 subunits arranged in a ring. Interacts with the chaperonin GroEL.

The protein localises to the cytoplasm. Functionally, together with the chaperonin GroEL, plays an essential role in assisting protein folding. The GroEL-GroES system forms a nano-cage that allows encapsulation of the non-native substrate proteins and provides a physical environment optimized to promote and accelerate protein folding. GroES binds to the apical surface of the GroEL ring, thereby capping the opening of the GroEL channel. This Rubrobacter xylanophilus (strain DSM 9941 / JCM 11954 / NBRC 16129 / PRD-1) protein is Co-chaperonin GroES.